Reading from the N-terminus, the 520-residue chain is 2-isopropylmalate synthase (520 aa).

In terms of domain architecture, Pyruvate carboxyltransferase spans valine 12–threonine 274. Mn(2+) contacts are provided by aspartate 21, histidine 209, histidine 211, and asparagine 245. Residues lysine 398 to valine 520 are regulatory domain.

It belongs to the alpha-IPM synthase/homocitrate synthase family. LeuA type 1 subfamily. Homodimer. It depends on Mn(2+) as a cofactor.

The protein resides in the cytoplasm. The catalysed reaction is 3-methyl-2-oxobutanoate + acetyl-CoA + H2O = (2S)-2-isopropylmalate + CoA + H(+). It functions in the pathway amino-acid biosynthesis; L-leucine biosynthesis; L-leucine from 3-methyl-2-oxobutanoate: step 1/4. Catalyzes the condensation of the acetyl group of acetyl-CoA with 3-methyl-2-oxobutanoate (2-ketoisovalerate) to form 3-carboxy-3-hydroxy-4-methylpentanoate (2-isopropylmalate). The protein is 2-isopropylmalate synthase of Methylorubrum populi (strain ATCC BAA-705 / NCIMB 13946 / BJ001) (Methylobacterium populi).